The primary structure comprises 76 residues: Small ribosomal subunit protein bS18 (76 aa).

It belongs to the bacterial ribosomal protein bS18 family. As to quaternary structure, part of the 30S ribosomal subunit. Forms a tight heterodimer with protein bS6.

Its function is as follows. Binds as a heterodimer with protein bS6 to the central domain of the 16S rRNA, where it helps stabilize the platform of the 30S subunit. This is Small ribosomal subunit protein bS18 from Petrotoga mobilis (strain DSM 10674 / SJ95).